Here is a 222-residue protein sequence, read N- to C-terminus: E3 ubiquitin-protein ligase RNF138 (222 aa).

The RING-type zinc-finger motif lies at 17–57; that stretch reads CPVCQEILQTPVRTQTCRHVFCRKCFMLAMKSGGAYCPLCR. Zn(2+) contacts are provided by C85, C88, H100, and C104. A C2HC RNF-type zinc finger spans residues 85-104; it reads CMYCGKMMKLHYMKLHYKSC. C2H2-type zinc fingers lie at residues 134-157 and 164-192; these read YKCP…NNVH and MVCP…NARH. In terms of domain architecture, UIM spans 202 to 220; the sequence is INIDEEAQFQIAVANSYKI.

Interacts with nlk.2 (via C-terminus) and ube2k. Post-translationally, auto-ubiquitinated.

It is found in the chromosome. It catalyses the reaction S-ubiquitinyl-[E2 ubiquitin-conjugating enzyme]-L-cysteine + [acceptor protein]-L-lysine = [E2 ubiquitin-conjugating enzyme]-L-cysteine + N(6)-ubiquitinyl-[acceptor protein]-L-lysine.. Its pathway is protein modification; protein ubiquitination. E3 ubiquitin-protein ligase involved in DNA damage response by promoting DNA resection and homologous recombination. Recruited to sites of double-strand breaks following DNA damage and specifically promotes double-strand break repair via homologous recombination. Together with nlk.2, involved in the ubiquitination and degradation of TCF/LEF. Also exhibits auto-ubiquitination activity in combination with ube2k. May act as a negative regulator in the Wnt/beta-catenin-mediated signaling pathway. The polypeptide is E3 ubiquitin-protein ligase RNF138 (rnf138) (Xenopus laevis (African clawed frog)).